The chain runs to 179 residues: Large ribosomal subunit protein uL5 (179 aa).

This sequence belongs to the universal ribosomal protein uL5 family. In terms of assembly, part of the 50S ribosomal subunit; part of the 5S rRNA/L5/L18/L25 subcomplex. Contacts the 5S rRNA and the P site tRNA. Forms a bridge to the 30S subunit in the 70S ribosome.

In terms of biological role, this is one of the proteins that bind and probably mediate the attachment of the 5S RNA into the large ribosomal subunit, where it forms part of the central protuberance. In the 70S ribosome it contacts protein S13 of the 30S subunit (bridge B1b), connecting the 2 subunits; this bridge is implicated in subunit movement. Contacts the P site tRNA; the 5S rRNA and some of its associated proteins might help stabilize positioning of ribosome-bound tRNAs. This is Large ribosomal subunit protein uL5 from Shewanella sp. (strain ANA-3).